A 402-amino-acid polypeptide reads, in one-letter code: Imidazolonepropionase (402 aa).

Residues H66 and H68 each coordinate Fe(3+). Zn(2+)-binding residues include H66 and H68. 4-imidazolone-5-propanoate-binding residues include R75, Y138, and H171. Y138 is an N-formimidoyl-L-glutamate binding site. H236 provides a ligand contact to Fe(3+). Residue H236 coordinates Zn(2+). Q239 is a binding site for 4-imidazolone-5-propanoate. A Fe(3+)-binding site is contributed by D311. Position 311 (D311) interacts with Zn(2+). N-formimidoyl-L-glutamate is bound by residues N313 and G315. T316 is a 4-imidazolone-5-propanoate binding site.

This sequence belongs to the metallo-dependent hydrolases superfamily. HutI family. Zn(2+) serves as cofactor. The cofactor is Fe(3+).

The protein localises to the cytoplasm. The catalysed reaction is 4-imidazolone-5-propanoate + H2O = N-formimidoyl-L-glutamate. The protein operates within amino-acid degradation; L-histidine degradation into L-glutamate; N-formimidoyl-L-glutamate from L-histidine: step 3/3. Its function is as follows. Catalyzes the hydrolytic cleavage of the carbon-nitrogen bond in imidazolone-5-propanoate to yield N-formimidoyl-L-glutamate. It is the third step in the universal histidine degradation pathway. The protein is Imidazolonepropionase of Pseudomonas aeruginosa (strain UCBPP-PA14).